The primary structure comprises 240 residues: Protein RoBo-1 (240 aa).

A signal peptide spans 1-26; the sequence is MSWFLVLKCLLTVCIISHLSVSSTES. The N-linked (GlcNAc...) asparagine glycan is linked to N42. 5 disulfides stabilise this stretch: C47/C76, C81/C102, C103/C108, C127/C151, and C144/C171. N153 carries N-linked (GlcNAc...) asparagine glycosylation.

It belongs to the CNF-like-inhibitor family. In terms of processing, N-glycosylated. In terms of tissue distribution, expressed abundantly in bone, including the lengthening growth plate where cartilage is remodeled into bone.

It is found in the secreted. May play a novel role in the growth or remodeling of bone. This chain is Protein RoBo-1, found in Rattus norvegicus (Rat).